Consider the following 364-residue polypeptide: Melatonin receptor type 1B (364 aa).

At 1 to 42 (MPENSSIPNCCEASGLAARPSWSGSAGARPPVTARAPWVAPM) the chain is on the extracellular side. N-linked (GlcNAc...) asparagine glycosylation occurs at Asn-4. A helical transmembrane segment spans residues 43 to 63 (LSTVVVVTTAVDFVGNLLVIL). Residues 64–76 (SVLRNRKLRNAGN) lie on the Cytoplasmic side of the membrane. A helical transmembrane segment spans residues 77–97 (LFVVSLALADLVIALYPYPLI). The Extracellular segment spans residues 98 to 115 (LVAIIRDGWVLGEAHCKA). A disulfide bridge links Cys-113 with Cys-190. A helical membrane pass occupies residues 116 to 136 (SAFVMGLSVIGSVFNITAIAI). Residues 137–155 (NRYCCICHSTTYHRVCSHW) are Cytoplasmic-facing. A helical transmembrane segment spans residues 156-176 (YTPIYISLVWLLTLVALVPNF). At 177–200 (FVGSLEYDPRIYSCTFIQTASTQY) the chain is on the extracellular side. A helical membrane pass occupies residues 201–221 (TAAVVAIHFLLPMAVVSFCYL). At 222-253 (RIWVLVLQARRKAKATRKLRLRPSDLRSFLTM) the chain is on the cytoplasmic side. Residues 254–274 (FAVFVVFAICWAPLNCIGLAV) form a helical membrane-spanning segment. Residues 275–287 (AINPEAMALQVPE) are Extracellular-facing. Residues 288–308 (GLFVTSYFLAYFNSCLNAIVY) traverse the membrane as a helical segment. Over 309–364 (GLLNQNFRREYKRILLAIWNTRRCIQHASKHCLTEERQGPTPPAARATVPVKEGAL) the chain is Cytoplasmic. The segment at 343–364 (EERQGPTPPAARATVPVKEGAL) is disordered. The span at 352–364 (AARATVPVKEGAL) shows a compositional bias: low complexity.

Belongs to the G-protein coupled receptor 1 family.

It localises to the cell membrane. In terms of biological role, high affinity receptor for melatonin. The activity of this receptor is mediated by pertussis toxin sensitive G proteins that inhibits adenylate cyclase activity. This chain is Melatonin receptor type 1B (Mtnr1b), found in Mus musculus (Mouse).